Consider the following 257-residue polypeptide: Distal membrane-arm assembly complex protein 2 (257 aa).

Ser253 bears the Phosphoserine mark.

It belongs to the ATP synthase subunit s family. Interacts with incompletely assembled mitochondrial NADH:ubiquinone oxidoreductase complex (complex I).

The protein localises to the mitochondrion. In terms of biological role, required for the assembly of the mitochondrial NADH:ubiquinone oxidoreductase complex (complex I). Involved in the assembly of the distal region of complex I. The polypeptide is Distal membrane-arm assembly complex protein 2 (Homo sapiens (Human)).